Consider the following 101-residue polypeptide: Large ribosomal subunit protein uL24 (101 aa).

It belongs to the universal ribosomal protein uL24 family. In terms of assembly, part of the 50S ribosomal subunit.

Functionally, one of two assembly initiator proteins, it binds directly to the 5'-end of the 23S rRNA, where it nucleates assembly of the 50S subunit. One of the proteins that surrounds the polypeptide exit tunnel on the outside of the subunit. This Cereibacter sphaeroides (strain ATCC 17029 / ATH 2.4.9) (Rhodobacter sphaeroides) protein is Large ribosomal subunit protein uL24.